A 346-amino-acid polypeptide reads, in one-letter code: Tyrosine--tRNA ligase (346 aa).

Tyrosine 35 is an L-tyrosine binding site. Positions 40 to 48 match the 'HIGH' region motif; that stretch reads PTGEMHIGH. Positions 162, 166, 169, and 184 each coordinate L-tyrosine.

It belongs to the class-I aminoacyl-tRNA synthetase family. TyrS type 3 subfamily. As to quaternary structure, homodimer.

It is found in the cytoplasm. It carries out the reaction tRNA(Tyr) + L-tyrosine + ATP = L-tyrosyl-tRNA(Tyr) + AMP + diphosphate + H(+). Its function is as follows. Catalyzes the attachment of tyrosine to tRNA(Tyr) in a two-step reaction: tyrosine is first activated by ATP to form Tyr-AMP and then transferred to the acceptor end of tRNA(Tyr). The polypeptide is Tyrosine--tRNA ligase (Haloarcula marismortui (strain ATCC 43049 / DSM 3752 / JCM 8966 / VKM B-1809) (Halobacterium marismortui)).